The chain runs to 130 residues: Organ-specific protein P4 (130 aa).

A run of 2 repeats spans residues 60 to 85 (HAKENKGAIGEFEPCPNASAYGDNEI) and 86 to 111 (HANENKGAIGEFETRPNGSAYGDNEI). The interval 60 to 111 (HAKENKGAIGEFEPCPNASAYGDNEIHANENKGAIGEFETRPNGSAYGDNEI) is 2 X 26 AA tandem repeats. Residues 79 to 130 (AYGDNEIHANENKGAIGEFETRPNGSAYGDNEIGAEFTDDFEPRPSMTKYNA) are disordered.

It to organ specific protein S2. In terms of tissue distribution, expressed in pods.

This Pisum sativum (Garden pea) protein is Organ-specific protein P4.